The sequence spans 894 residues: Interleukin enhancer-binding factor 3 (894 aa).

The DZF domain occupies 5–378 (RIFVNDDRHV…PMKRPMEEDG (374 aa)). The tract at residues 50–86 (DEQEKGSSEQAESDNMDVPPEDDSKEGAGEQKTEHMT) is disordered. Over residues 60–73 (AESDNMDVPPEDDS) the composition is skewed to acidic residues. Ser62 is subject to Phosphoserine. Over residues 74 to 86 (KEGAGEQKTEHMT) the composition is skewed to basic and acidic residues. Lys100 carries the N6-acetyllysine modification. Thr188 is modified (phosphothreonine; by PKR). Phosphoserine is present on Ser190. Lys297 participates in a covalent cross-link: Glycyl lysine isopeptide (Lys-Gly) (interchain with G-Cter in ubiquitin). Thr315 is modified (phosphothreonine; by PKR). Lys348 participates in a covalent cross-link: Glycyl lysine isopeptide (Lys-Gly) (interchain with G-Cter in SUMO1). The disordered stretch occupies residues 363–401 (TTYAITPMKRPMEEDGEEKSPSKKKKKIQKKEEKAEPPQ). Positions 371–389 (KRPMEEDGEEKSPSKKKKK) match the Bipartite nuclear localization signal motif. Residues 372-383 (RPMEEDGEEKSP) are compositionally biased toward basic and acidic residues. Phosphoserine occurs at positions 382 and 384. Residue Lys396 forms a Glycyl lysine isopeptide (Lys-Gly) (interchain with G-Cter in SUMO2) linkage. Residues 398-467 (EPPQAMNALM…AVKVLQDMGL (70 aa)) form the DRBM 1 domain. Lys460 carries the post-translational modification N6-acetyllysine. A disordered region spans residues 466 to 524 (GLPTGAEGRDSSKGEDSAEETEAKPAVVAPAPVVEAVSTPSAAFPSDATAEQGPILTKH). Over residues 472 to 481 (EGRDSSKGED) the composition is skewed to basic and acidic residues. A phosphoserine mark is found at Ser476, Ser477, and Ser482. Residue Lys489 forms a Glycyl lysine isopeptide (Lys-Gly) (interchain with G-Cter in SUMO2) linkage. Low complexity predominate over residues 489 to 508 (KPAVVAPAPVVEAVSTPSAA). Positions 524–590 (HGKNPVMELN…ALAALEKLFP (67 aa)) constitute a DRBM 2 domain. A Phosphothreonine modification is found at Thr592. Positions 609-894 (RGGPKFAAKP…ADHSMNYQYR (286 aa)) are interaction with PRMT1. Disordered regions lie at residues 625 to 660 (MGGP…FGGA) and 718 to 894 (QGDN…YQYR). A compositionally biased stretch (gly residues) spans 644–660 (RGGSIRGRGRGRGFGGA). 2 stretches are compositionally biased toward low complexity: residues 743-770 (PSYG…YGPP) and 777-792 (YNHG…SYNS). 4 positions are modified to phosphoserine: Ser792, Ser810, Ser812, and Ser816. Composition is skewed to gly residues over residues 811–825 (GSGG…GSGG) and 832–851 (SHGG…GKQG). Polar residues predominate over residues 857–866 (NYNSPGSGQN). Residues 867 to 878 (YSGPPSSYQSSQ) show a composition bias toward low complexity.

In terms of assembly, identified in a IGF2BP1-dependent mRNP granule complex containing untranslated mRNAs. Interacts with FUS and SMN. Interacts (via C-terminus) with PRMT1. Forms a complex with ILF2. Can also bind to PRKDC/XRCC7: this may stabilize the interaction of PRKDC/XRCC7 and the heterodimeric complex of XRCC6/KU70 and XRCC5/KU80. Forms a heteromeric complex with ZNF346 and ILF3. Found in a nuclear export complex with XPO5, ILF3, Ran and double-stranded RNA or double-stranded minihelix VA1 RNA. Found in a nuclear export complex with XPO5, RAN, ILF3, ZNF346 and double-stranded RNA. Interacts with XPO5 and ZNF346. Forms a complex with ILF2, YLPM1, KHDRBS1, RBMX, NCOA5 and PPP1CA. Interacts with AGO1 and AGO2. Interacts with DHX36; this interaction occurs in a RNA-dependent manner. Interacts with ELAVL1; this interaction occurs in a RNA-dependent manner. Interacts with HAVCR2; this interaction promotes ILF3 ubiquitination and subsequent degradation. In terms of processing, phosphorylated at Thr-188 and Thr-315 by PKR in response to certain RNA viruses. This phosphorylation results in the dissociation of ILF2 from the ILF2-ILF3 complex resulting in a cytoplasmic sequestration of ILF3 where it can bind to viral RNAs and impede viral replication. Methylated by protein arginine N-methyltransferase 1. Post-translationally, ubiquitinated at Lys-297 in a TRIM47-dependent manner; this 'Lys-48'-linked ubiquitination promotes ILF3 degradation. Ubiquitous.

It localises to the nucleus. The protein resides in the nucleolus. It is found in the cytoplasm. Functionally, RNA-binding protein that plays an essential role in the biogenesis of circular RNAs (circRNAs) which are produced by back-splicing circularization of pre-mRNAs. Within the nucleus, promotes circRNAs processing by stabilizing the regulatory elements residing in the flanking introns of the circularized exons. Plays thereby a role in the back-splicing of a subset of circRNAs. As a consequence, participates in a wide range of transcriptional and post-transcriptional processes. Binds to poly-U elements and AU-rich elements (AREs) in the 3'-UTR of target mRNAs. Upon viral infection, ILF3 accumulates in the cytoplasm and participates in the innate antiviral response. Mechanistically, ILF3 becomes phosphorylated and activated by the double-stranded RNA-activated protein kinase/PKR which releases ILF3 from cellular mature circRNAs. In turn, unbound ILF3 molecules are able to interact with and thus inhibit viral mRNAs. (Microbial infection) Plays a positive role in HIV-1 virus production by binding to and thereby stabilizing HIV-1 RNA, together with ILF3. In Homo sapiens (Human), this protein is Interleukin enhancer-binding factor 3 (ILF3).